The primary structure comprises 435 residues: Adenylosuccinate synthetase (435 aa).

Residues 17-23 and 47-49 contribute to the GTP site; these read GDEGKGK and GHT. D18 functions as the Proton acceptor in the catalytic mechanism. Residues D18 and G47 each coordinate Mg(2+). IMP contacts are provided by residues 18–21, 45–48, T138, R152, N232, T247, and R311; these read DEGK and NAGH. The active-site Proton donor is the H48. 307–313 is a substrate binding site; that stretch reads VTTGRKR. GTP is bound by residues R313, 339-341, and 421-423; these read KLD and GVG.

Belongs to the adenylosuccinate synthetase family. As to quaternary structure, homodimer. It depends on Mg(2+) as a cofactor.

It is found in the cytoplasm. It catalyses the reaction IMP + L-aspartate + GTP = N(6)-(1,2-dicarboxyethyl)-AMP + GDP + phosphate + 2 H(+). It functions in the pathway purine metabolism; AMP biosynthesis via de novo pathway; AMP from IMP: step 1/2. Plays an important role in the de novo pathway and in the salvage pathway of purine nucleotide biosynthesis. Catalyzes the first committed step in the biosynthesis of AMP from IMP. This chain is Adenylosuccinate synthetase, found in Caenorhabditis briggsae.